The following is a 512-amino-acid chain: Gustatory and odorant receptor 63a (512 aa).

The disordered stretch occupies residues 1–24; it reads MRPSGEKVVKGHGQGNSGHSLSGM. At 1–129 the chain is on the cytoplasmic side; that stretch reads MRPSGEKVVK…PARAKFEMNS (129 aa). The helical transmembrane segment at 130–150 threads the bilayer; it reads ASFIYSVVFFVLLACYVGYVA. Residues 151–166 are Extracellular-facing; sequence NNRIHIVRSLSGPFEE. The chain crosses the membrane as a helical span at residues 167-187; that stretch reads AVIAYLFLVNILPIMIIPILW. The Cytoplasmic segment spans residues 188-222; it reads YEARKIAKLFNDWDDFEVLYYQISGHSLPLKLRQK. The helical transmembrane segment at 223–243 threads the bilayer; the sequence is AVYIAIVLPILSVLSVVITHV. Residues 244–265 lie on the Extracellular side of the membrane; it reads TMSDLNINQVVPYCILDNLTAM. Asparagine 261 is a glycosylation site (N-linked (GlcNAc...) asparagine). The helical transmembrane segment at 266–285 threads the bilayer; that stretch reads LGAWWFLICEAMSITAHLLA. Topologically, residues 286-324 are cytoplasmic; that stretch reads ERFQKALKHIGPAAMVADYRVLWLRLSKLTRDTGNALCY. A helical transmembrane segment spans residues 325 to 345; that stretch reads TFVFMSLYLFFIITLSIYGLM. At 346 to 350 the chain is on the extracellular side; the sequence is SQLSE. Residues 351–371 form a helical membrane-spanning segment; that stretch reads GFGIKDIGLTITALWNIGLLF. Topologically, residues 372-436 are cytoplasmic; it reads YICDEAHYAS…FFDVNRTLFK (65 aa). A helical transmembrane segment spans residues 437–457; that stretch reads GLLTTMVTYLVVLLQFQISIP. Over 458 to 512 the chain is Extracellular; that stretch reads TDKGDSEGANNITVVDFVMDSLDNDMSLMGASTLSTTTVGTTLPPPIMKLKGRKG. The N-linked (GlcNAc...) asparagine glycan is linked to asparagine 468.

The protein belongs to the insect chemoreceptor superfamily. Gustatory receptor (GR) family. Gr21a subfamily. In terms of assembly, gr21a and Gr63a probably form a heterodimer that responds to CO(2). As to expression, expressed in the medial aspect of the third antennal segment. Carbon dioxide-responsive neurons coexpress Gr21a and Gr63a in a pair of chemosensory receptors at both larval and adult life stages.

Its subcellular location is the cell membrane. Gustatory and odorant receptor which mediates acceptance or avoidance behavior, depending on its substrates. Gr21a and Gr63a together are sufficient for carbon dioxide detection and avoidance behavior. It is possible that the CO(2) receptors Gr63a and Gr21a activate the TRPC channels through Galpha49B and Plc21C. This innate olfactory avoidance behavior can be inhibited by inhibitory interactions of the odors such as 1-hexanol and 2,3-butanedione with Gr21a and Gr63a. The protein is Gustatory and odorant receptor 63a (Gr63a) of Drosophila melanogaster (Fruit fly).